A 184-amino-acid polypeptide reads, in one-letter code: KSAAXVTLDLFGDWRAKRHDNAQLLTGINLNGQTLGIAFMSKXSVGLIQDYXKSYLLVASVMAHELGHNLGMEHDDGNCICPAKCIDNKPLRTDIVSPAVCGNYFVELTPGSQCADGVCCDQCRKAGVTVAPDLCFDYNQLGTEDKFTHSPDDPDYGMVDLGTKCADGKVCNSNRQCVDVNTAY.

Positions 1–90 (KSAAXVTLDL…CPAKCIDNKP (90 aa)) constitute a Peptidase M12B domain. D20 contacts Ca(2+). A Zn(2+)-binding site is contributed by H64. The active site involves E65. Residues H68 and H74 each contribute to the Zn(2+) site. Residues N88, V100, N103, F105, and E107 each coordinate Ca(2+). The Disintegrin domain maps to 98–124 (PAVCGNYFVELTPGSQCADGVCCDQCR). Disulfide bonds link C114–C120 and C165–C177.

The protein belongs to the venom metalloproteinase (M12B) family. P-III subfamily. P-IIIc sub-subfamily. Heterodimer; disulfide-linked. Requires Zn(2+) as cofactor. In terms of processing, the N-terminus is blocked. Post-translationally, N-glycosylated. As to expression, expressed by the venom gland.

Its subcellular location is the secreted. Its activity is regulated as follows. Inhibited by EDTA, DTT and zinc ions. Partially inhibited by L-cysteine. Not inhibited by 2-propanol or PMSF. Activity is enhanced by calcium or magnesium ions. In terms of biological role, snake venom zinc metalloprotease that has fibrinogenolytic and hemorrhagic activities in mouse and rats. Hydrolyzes the Aalpha-chain (FGA) and more slowly the Bbeta-chain of fibrinogen (FGB), without affecting the gamma-chain. Its hemorrhagic activity results of its involvement in cleavage of basal membrane components (nidogen and fibronectin but not laminin) and depletion of fibrinogen, prothrombin (F2) and factor X (F10) in blood circulation. Also possess potent azocaseinolytic activity and cleaves insulin B-chain, hydrolyzing it at positions Gln(4)-His(5), His(10)-Leu(11) and Tyr(16)-Leu(17). This is Zinc metalloproteinase-disintegrin-like ammodytagin from Vipera ammodytes ammodytes (Western sand viper).